The following is a 243-amino-acid chain: Cysteine-rich secretory protein 2 (243 aa).

The N-terminal stretch at 1–21 is a signal peptide; the sequence is MALLPVLFLVTVLLPSLPAEG. The SCP domain maps to 41–169; sequence VNKHNELRKA…SLKYYYVCQY (129 aa). Cystine bridges form between C189/C196, C192/C201, C205/C238, C214/C232, and C223/C236. In terms of domain architecture, ShKT spans 205 to 238; it reads CQYQDLLSNCDSLKNTAGCEHELLKEKCKATCLC.

Belongs to the CRISP family. Interacts with NSUN4 isoform 3. Testis and epididymis.

The protein localises to the secreted. In terms of biological role, may regulate some ion channels' activity and thereby regulate calcium fluxes during sperm capacitation. The protein is Cysteine-rich secretory protein 2 (CRISP2) of Homo sapiens (Human).